A 388-amino-acid chain; its full sequence is Succinate--CoA ligase [ADP-forming] subunit beta (388 aa).

Positions lysine 9 to glutamine 244 constitute an ATP-grasp domain. ATP is bound by residues lysine 46, glycine 53–glycine 55, glutamate 99, threonine 102, and glutamate 107. 2 residues coordinate Mg(2+): asparagine 199 and aspartate 213. Residues asparagine 264 and glycine 321–valine 323 contribute to the substrate site.

This sequence belongs to the succinate/malate CoA ligase beta subunit family. Heterotetramer of two alpha and two beta subunits. Mg(2+) serves as cofactor.

It carries out the reaction succinate + ATP + CoA = succinyl-CoA + ADP + phosphate. The enzyme catalyses GTP + succinate + CoA = succinyl-CoA + GDP + phosphate. The protein operates within carbohydrate metabolism; tricarboxylic acid cycle; succinate from succinyl-CoA (ligase route): step 1/1. Succinyl-CoA synthetase functions in the citric acid cycle (TCA), coupling the hydrolysis of succinyl-CoA to the synthesis of either ATP or GTP and thus represents the only step of substrate-level phosphorylation in the TCA. The beta subunit provides nucleotide specificity of the enzyme and binds the substrate succinate, while the binding sites for coenzyme A and phosphate are found in the alpha subunit. The polypeptide is Succinate--CoA ligase [ADP-forming] subunit beta (Klebsiella pneumoniae (strain 342)).